The chain runs to 243 residues: Ribonuclease PH (243 aa).

Phosphate-binding positions include arginine 91 and 129–131 (GTR).

The protein belongs to the RNase PH family. As to quaternary structure, homohexameric ring arranged as a trimer of dimers.

It catalyses the reaction tRNA(n+1) + phosphate = tRNA(n) + a ribonucleoside 5'-diphosphate. In terms of biological role, phosphorolytic 3'-5' exoribonuclease that plays an important role in tRNA 3'-end maturation. Removes nucleotide residues following the 3'-CCA terminus of tRNAs; can also add nucleotides to the ends of RNA molecules by using nucleoside diphosphates as substrates, but this may not be physiologically important. Probably plays a role in initiation of 16S rRNA degradation (leading to ribosome degradation) during starvation. The chain is Ribonuclease PH from Burkholderia thailandensis (strain ATCC 700388 / DSM 13276 / CCUG 48851 / CIP 106301 / E264).